A 294-amino-acid chain; its full sequence is Glutamyl-Q tRNA(Asp) synthetase (294 aa).

L-glutamate-binding positions include 8-12 and Glu-44; that span reads RFAPT. Residues 11–21 carry the 'HIGH' region motif; the sequence is PTPSGYLHFGS. Residues Cys-100, Cys-102, Tyr-114, and Cys-118 each contribute to the Zn(2+) site. Residues Tyr-171 and Arg-189 each contribute to the L-glutamate site. Positions 227–231 match the 'KMSKS' region motif; it reads KLGKS. Lys-230 serves as a coordination point for ATP.

Belongs to the class-I aminoacyl-tRNA synthetase family. GluQ subfamily. Zn(2+) is required as a cofactor.

In terms of biological role, catalyzes the tRNA-independent activation of glutamate in presence of ATP and the subsequent transfer of glutamate onto a tRNA(Asp). Glutamate is transferred on the 2-amino-5-(4,5-dihydroxy-2-cyclopenten-1-yl) moiety of the queuosine in the wobble position of the QUC anticodon. The sequence is that of Glutamyl-Q tRNA(Asp) synthetase from Ectopseudomonas mendocina (strain ymp) (Pseudomonas mendocina).